A 132-amino-acid chain; its full sequence is uncharacterized protein (132 aa).

This is an uncharacterized protein from Escherichia coli.